The primary structure comprises 1841 residues: Sodium channel protein type 4 subunit alpha (1841 aa).

Over 1–131 (MASSSLPTLV…RVAIKVLIHA (131 aa)) the chain is Cytoplasmic. Over residues 32–60 (AMEEEARLQRNKQMEIEEPERKPRSDLEA) the composition is skewed to basic and acidic residues. Residues 32-63 (AMEEEARLQRNKQMEIEEPERKPRSDLEAGKN) are disordered. An I repeat occupies 113 to 448 (MLSPFSIVRR…VVAMAYAEQN (336 aa)). The helical transmembrane segment at 132–150 (LFSMFIMITILTNCVFMTM) threads the bilayer. Topologically, residues 151–157 (SNPPSWS) are extracellular. A helical membrane pass occupies residues 158 to 178 (KDVEYTFTGIYTFESLIKMLA). Topologically, residues 179–192 (RGFCIDDFTFLRDP) are cytoplasmic. Residues 193–210 (WNWLDFSVITMAYVTEFV) traverse the membrane as a helical segment. The Extracellular segment spans residues 211–216 (DLGNIS). An N-linked (GlcNAc...) asparagine glycan is attached at asparagine 214. A helical membrane pass occupies residues 217–233 (ALRTFRVLRALKTITVI). At 234-252 (PGLKTIVGALIQSVKKLSD) the chain is on the cytoplasmic side. Residues 253-272 (VMILTVFCLSVFALVGLQLF) form a helical membrane-spanning segment. Over 273–385 (MGNLRQKCVR…PNYGYTSYDT (113 aa)) the chain is Extracellular. Cysteine 280 and cysteine 354 are joined by a disulfide. N-linked (GlcNAc...) asparagine glycosylation is found at asparagine 288, asparagine 291, asparagine 297, asparagine 303, asparagine 315, asparagine 327, and asparagine 356. A disulfide bridge connects residues cysteine 363 and cysteine 369. Residues 386–410 (FSWAFLALFRLMTQDYWENLFQLTL) constitute an intramembrane region (pore-forming). At 411-417 (RAAGKTY) the chain is on the extracellular side. Residues 418–438 (MIFFVVIIFLGSFYLINLILA) form a helical membrane-spanning segment. Residues 439–572 (VVAMAYAEQN…HIILLIVMDP (134 aa)) are Cytoplasmic-facing. The interval 484 to 522 (ALEGGEEADGDPTHSKDCNGSLDTSGEKGPPRPSCSAES) is disordered. The stretch at 554 to 826 (CCAPWVKFKH…QIAIGRIKWG (273 aa)) is one II repeat. A helical transmembrane segment spans residues 573–591 (FVDLGITICIVLNTLFMAM). The Extracellular segment spans residues 592–602 (EHYPMTEHFDN). The helical transmembrane segment at 603-622 (VLSVGNLVFTGIFTAEMVLK) threads the bilayer. Residues 623–636 (LIAMDPYEYFQQGW) lie on the Cytoplasmic side of the membrane. The chain crosses the membrane as a helical span at residues 637–656 (NIFDSFIVTLSLVELGLANV). The Extracellular portion of the chain corresponds to 657 to 658 (QG). A helical transmembrane segment spans residues 659 to 676 (LSVLRSFRLLRVFKLAKS). The Cytoplasmic segment spans residues 677–692 (WPTLNMLIKIIGNSVG). The chain crosses the membrane as a helical span at residues 693–711 (ALGNLTLVLAIIVFIFAVV). The Extracellular portion of the chain corresponds to 712 to 740 (GMQLFGKSYKECVCKIASDCSLPRWHMHD). A disulfide bridge links cysteine 725 with cysteine 731. The pore-forming intramembrane region spans 741–761 (FFHSFLIVFRILCGEWIETMW). Over 762–772 (DCMEVAGQAMC) the chain is Extracellular. A disulfide bridge connects residues cysteine 763 and cysteine 772. A helical transmembrane segment spans residues 773–791 (LTVFLMVMVIGNLVVLNLF). The Cytoplasmic segment spans residues 792–1026 (LALLLSSFSA…ACFKIVEHNW (235 aa)). Disordered regions lie at residues 854–896 (EPGG…LTDG) and 925–983 (SDLE…EGEL). The span at 867–887 (EDEKKEPPPEDGNKELKDNHI) shows a compositional bias: basic and acidic residues. 2 stretches are compositionally biased toward acidic residues: residues 925 to 941 (SDLE…FSEP) and 969 to 983 (EDPE…EGEL). An III repeat occupies 1007–1320 (RGKMWWTLRR…KKYYNAMKKL (314 aa)). The chain crosses the membrane as a helical span at residues 1027-1044 (FETFIVFMILLSSGALAF). Residues 1045 to 1057 (EDIYIEQRRVIRT) are Extracellular-facing. Residues 1058 to 1076 (ILEYADKVFTYIFILEMLL) traverse the membrane as a helical segment. Topologically, residues 1077–1090 (KWVAYGFKVYFTNA) are cytoplasmic. A helical transmembrane segment spans residues 1091–1109 (WCWLDFLIVDVSIISLVAN). Residues 1110–1117 (WLGYSELG) lie on the Extracellular side of the membrane. The chain crosses the membrane as a helical span at residues 1118–1136 (PIKSLRTLRALRPLRALSR). Residues 1137–1153 (FEGMRVVVNALLGAIPS) are Cytoplasmic-facing. The helical transmembrane segment at 1154–1173 (IMNVLLVCLIFWLIFSIMGV) threads the bilayer. At 1174-1224 (NLFAGKFYYCINTTTSERFDISVVNNKSECESLMYTGQVRWMNVKVNYDNV) the chain is on the extracellular side. Cysteine 1183 and cysteine 1203 form a disulfide bridge. 2 N-linked (GlcNAc...) asparagine glycosylation sites follow: asparagine 1185 and asparagine 1199. Positions 1225–1246 (GLGYLSLLQVATFKGWMDIMYA) form an intramembrane region, pore-forming. Over 1247 to 1263 (AVDSREKEEQPDYEVNL) the chain is Extracellular. A helical membrane pass occupies residues 1264–1285 (YMYLYFVIFIIFGSFFTLNLFI). Residues 1286–1348 (GVIIDNFNQQ…MVYDFVTKQV (63 aa)) lie on the Cytoplasmic side of the membrane. Residues 1304-1306 (IFM) are important for rapid channel inactivation. One copy of the IV repeat lies at 1329 to 1627 (IPRPQNKIQG…WEKFDPDATQ (299 aa)). The chain crosses the membrane as a helical span at residues 1349 to 1366 (FDISIMILICLNMVTMMV). Residues 1367 to 1377 (ETDDQSQLKVD) lie on the Extracellular side of the membrane. Residues 1378–1396 (ILYNINMVFIIVFTGECVL) traverse the membrane as a helical segment. At 1397–1408 (KMFALRHYYFTI) the chain is on the cytoplasmic side. The helical transmembrane segment at 1409-1426 (GWNIFDFVVVILSIVGLA) threads the bilayer. Over 1427-1439 (LSDLIQKYFVSPT) the chain is Extracellular. The helical transmembrane segment at 1440-1456 (LFRVIRLARIGRVLRLI) threads the bilayer. Over 1457–1475 (RGAKGIRTLLFALMMSLPA) the chain is Cytoplasmic. A helical membrane pass occupies residues 1476 to 1493 (LFNIGLLLFLVMFIYSIF). The Extracellular portion of the chain corresponds to 1494-1515 (GMSNFAYVKKESGIDDMFNFET). Residues 1516 to 1538 (FGNSIICLFEITTSAGWDGLLNP) constitute an intramembrane region (pore-forming). At 1539–1568 (ILNSGPPDCDPTLENPGTNIKGDCGNPSIG) the chain is on the extracellular side. A disulfide bridge connects residues cysteine 1547 and cysteine 1562. A helical membrane pass occupies residues 1569-1591 (ICFFCSYIIISFLIVVNMYIAII). Residues 1592–1841 (LENFNVATEE…VRPGVKESLV (250 aa)) lie on the Cytoplasmic side of the membrane. The IQ domain occupies 1721-1750 (EEVCAIKIQRAYRRHLLQRSVKQASYMYRH). Residues 1776–1794 (SEKEDNGVQSQGEKEKDST) show a composition bias toward basic and acidic residues. The tract at residues 1776-1841 (SEKEDNGVQS…VRPGVKESLV (66 aa)) is disordered. A compositionally biased stretch (polar residues) spans 1801 to 1812 (TEVTAPSSSDTA). Residues 1814–1826 (TPPPPSPPPPSSP) are compositionally biased toward pro residues.

This sequence belongs to the sodium channel (TC 1.A.1.10) family. Nav1.4/SCN4A subfamily. As to quaternary structure, the Nav1.4 voltage-gated sodium channel consists of an ion-conducting alpha subunit SCN4A which is functional on its own and a regulatory beta subunit SCN1B. SCN1B strongly enhances the presence of SCN4A at the cell surface. SCN1B is also required for rapid channel inactivation and recovery after inactivation. It prevents the decrease of channel activity in response to repetitive, high-frequency depolarizations. Interacts with the syntrophins SNTA1, SNTB1 and SNTB2 (via PDZ domain); probably links SCN4A to the actin cytoskeleton and the extracellular matrix via the dystrophin-associated protein complex and regulates its localization in muscle cells. Interacts with TMEM233; probable regulator of the channel. As to expression, detected in quadriceps muscle (at protein level). Detected in hind-limb skeletal muscles, but not in heart or brain. Detected at low levels in the myocardium. According to Pubme=26427606 detected also in brain.

The protein localises to the cell membrane. It carries out the reaction Na(+)(in) = Na(+)(out). With respect to regulation, the channel is inhibited by tetrodotoxin. Its function is as follows. Pore-forming subunit of Nav1.4, a voltage-gated sodium (Nav) channel that directly mediates the depolarizing phase of action potentials in excitable membranes. Navs, also called VGSCs (voltage-gated sodium channels) or VDSCs (voltage-dependent sodium channels), operate by switching between closed and open conformations depending on the voltage difference across the membrane. In the open conformation they allow Na(+) ions to selectively pass through the pore, along their electrochemical gradient. The influx of Na+ ions provokes membrane depolarization, initiating the propagation of electrical signals throughout cells and tissues. Highly expressed in skeletal muscles, Nav1.4 generates the action potential crucial for muscle contraction. The protein is Sodium channel protein type 4 subunit alpha of Mus musculus (Mouse).